Reading from the N-terminus, the 139-residue chain is Large ribosomal subunit protein uL13 (139 aa).

The protein belongs to the universal ribosomal protein uL13 family. In terms of assembly, part of the 50S ribosomal subunit.

Its function is as follows. This protein is one of the early assembly proteins of the 50S ribosomal subunit, although it is not seen to bind rRNA by itself. It is important during the early stages of 50S assembly. This Nitratiruptor sp. (strain SB155-2) protein is Large ribosomal subunit protein uL13.